We begin with the raw amino-acid sequence, 537 residues long: CTP synthase (537 aa).

The tract at residues 1-268 (MPFKCIFLTG…STFITEKLGL (268 aa)) is amidoligase domain. Ser-14 is a binding site for CTP. Ser-14 serves as a coordination point for UTP. 15–20 (SLGKGL) lines the ATP pocket. Tyr-55 contributes to the L-glutamine binding site. Position 72 (Asp-72) interacts with ATP. Residues Asp-72 and Glu-142 each coordinate Mg(2+). CTP-binding positions include 149-151 (DIE), 188-193 (KTKPTQ), and Lys-224. UTP contacts are provided by residues 188–193 (KTKPTQ) and Lys-224. A Glutamine amidotransferase type-1 domain is found at 294–533 (RIGLVGKYVQ…IQAALLYSKN (240 aa)). Gly-353 lines the L-glutamine pocket. Residue Cys-380 is the Nucleophile; for glutamine hydrolysis of the active site. Residues 381 to 384 (LGMQ), Glu-404, and Arg-461 contribute to the L-glutamine site. Residues His-506 and Glu-508 contribute to the active site.

This sequence belongs to the CTP synthase family. In terms of assembly, homotetramer.

It carries out the reaction UTP + L-glutamine + ATP + H2O = CTP + L-glutamate + ADP + phosphate + 2 H(+). It catalyses the reaction L-glutamine + H2O = L-glutamate + NH4(+). The catalysed reaction is UTP + NH4(+) + ATP = CTP + ADP + phosphate + 2 H(+). The protein operates within pyrimidine metabolism; CTP biosynthesis via de novo pathway; CTP from UDP: step 2/2. Its activity is regulated as follows. Allosterically activated by GTP, when glutamine is the substrate; GTP has no effect on the reaction when ammonia is the substrate. The allosteric effector GTP functions by stabilizing the protein conformation that binds the tetrahedral intermediate(s) formed during glutamine hydrolysis. Inhibited by the product CTP, via allosteric rather than competitive inhibition. Functionally, catalyzes the ATP-dependent amination of UTP to CTP with either L-glutamine or ammonia as the source of nitrogen. Regulates intracellular CTP levels through interactions with the four ribonucleotide triphosphates. This is CTP synthase from Chlamydia caviae (strain ATCC VR-813 / DSM 19441 / 03DC25 / GPIC) (Chlamydophila caviae).